A 259-amino-acid polypeptide reads, in one-letter code: UPF0246 protein NGO_0461 (259 aa).

This sequence belongs to the UPF0246 family.

In Neisseria gonorrhoeae (strain ATCC 700825 / FA 1090), this protein is UPF0246 protein NGO_0461.